The sequence spans 284 residues: Phosphatidylglycerol--prolipoprotein diacylglyceryl transferase (284 aa).

Helical transmembrane passes span 18 to 38 (LGGI…VIAF), 62 to 82 (YFLW…VLIY), 106 to 126 (FVGI…IASY), 136 to 156 (LLIY…FGRI), 190 to 210 (PSQL…VLWA), 218 to 238 (GLLI…AEFY), and 252 to 272 (LSMG…ILLY). Arg-155 serves as a coordination point for a 1,2-diacyl-sn-glycero-3-phospho-(1'-sn-glycerol).

Belongs to the Lgt family.

It localises to the cell inner membrane. The enzyme catalyses L-cysteinyl-[prolipoprotein] + a 1,2-diacyl-sn-glycero-3-phospho-(1'-sn-glycerol) = an S-1,2-diacyl-sn-glyceryl-L-cysteinyl-[prolipoprotein] + sn-glycerol 1-phosphate + H(+). Its pathway is protein modification; lipoprotein biosynthesis (diacylglyceryl transfer). Functionally, catalyzes the transfer of the diacylglyceryl group from phosphatidylglycerol to the sulfhydryl group of the N-terminal cysteine of a prolipoprotein, the first step in the formation of mature lipoproteins. The polypeptide is Phosphatidylglycerol--prolipoprotein diacylglyceryl transferase (Helicobacter pylori (strain G27)).